A 344-amino-acid chain; its full sequence is 3-isopropylmalate dehydrogenase (344 aa).

Substrate-binding residues include Arg-93, Arg-103, Arg-131, and Asp-215. Residues Asp-215, Asp-239, and Asp-243 each coordinate Mg(2+). 273–285 (GSAPDIAGKGIAN) is a binding site for NAD(+).

Belongs to the isocitrate and isopropylmalate dehydrogenases family. LeuB type 1 subfamily. As to quaternary structure, homodimer. The cofactor is Mg(2+). Mn(2+) is required as a cofactor.

Its subcellular location is the cytoplasm. It catalyses the reaction (2R,3S)-3-isopropylmalate + NAD(+) = 4-methyl-2-oxopentanoate + CO2 + NADH. It participates in amino-acid biosynthesis; L-leucine biosynthesis; L-leucine from 3-methyl-2-oxobutanoate: step 3/4. Catalyzes the oxidation of 3-carboxy-2-hydroxy-4-methylpentanoate (3-isopropylmalate) to 3-carboxy-4-methyl-2-oxopentanoate. The product decarboxylates to 4-methyl-2 oxopentanoate. This chain is 3-isopropylmalate dehydrogenase, found in Streptococcus mutans serotype c (strain ATCC 700610 / UA159).